A 368-amino-acid polypeptide reads, in one-letter code: Zinc finger protein 24 (368 aa).

Residue Lys22 forms a Glycyl lysine isopeptide (Lys-Gly) (interchain with G-Cter in SUMO2) linkage. Lys27 is covalently cross-linked (Glycyl lysine isopeptide (Lys-Gly) (interchain with G-Cter in SUMO1); alternate). A Glycyl lysine isopeptide (Lys-Gly) (interchain with G-Cter in SUMO2); alternate cross-link involves residue Lys27. The region spanning Arg52–Leu134 is the SCAN box domain. Residues Ser132 and Ser142 each carry the phosphoserine modification. Residues Lys147, Lys177, and Lys236 each participate in a glycyl lysine isopeptide (Lys-Gly) (interchain with G-Cter in SUMO2) cross-link. A C2H2-type 1 zinc finger spans residues His251–His273. Residues His251–His301 are necessary and sufficient for nuclear localization. Ser274 carries the phosphoserine modification. Residues Lys277 and Lys286 each participate in a glycyl lysine isopeptide (Lys-Gly) (interchain with G-Cter in SUMO2) cross-link. 3 consecutive C2H2-type zinc fingers follow at residues Tyr279–His301, Tyr307–His329, and Tyr335–His357. The residue at position 292 (Ser292) is a Phosphoserine. A Phosphotyrosine modification is found at Tyr335. Residues Lys361 and Lys367 each participate in a glycyl lysine isopeptide (Lys-Gly) (interchain with G-Cter in SUMO2) cross-link.

This sequence belongs to the krueppel C2H2-type zinc-finger protein family. Post-translationally, sumoylated.

It is found in the nucleus. Functionally, transcription factor required for myelination of differentiated oligodendrocytes. Required for the conversion of oligodendrocytes from the premyelinating to the myelinating state. In the developing central nervous system (CNS), involved in the maintenance in the progenitor stage by promoting the cell cycle. Specifically binds to the 5'-TCAT-3' DNA sequence. Has transcription repressor activity in vitro. The protein is Zinc finger protein 24 (ZNF24) of Pan troglodytes (Chimpanzee).